The primary structure comprises 776 residues: Transcription factor MYB3R-1 (776 aa).

The disordered stretch occupies residues 1–41 (MKREMKAPTTPLESLQGDLKGKQGRTSGPARRSTKGQWTPE). HTH myb-type domains are found at residues 30–81 (ARRS…QKVL), 82–137 (NPEL…NPGI), and 138–188 (NKNA…KKKL). 3 consecutive DNA-binding regions (H-T-H motif) follow at residues 58–81 (WKKI…QKVL), 110–133 (WSTI…HNHL), and 161–184 (WAEL…NSSV). Disordered regions lie at residues 217–253 (SSWM…STND), 364–384 (FQSS…TDPE), and 401–435 (DNMK…AETH). Polar residues-rich tracts occupy residues 240 to 253 (CSQA…STND), 364 to 380 (FQSS…SNSD), and 423 to 432 (GKGSLCSQAA). Positions 648–655 (KKRHRDLL) match the Nuclear localization signal motif.

Component of a DREAM-like complex which modulates a variety of developmentally regulated genes and of the mitotic genes in proliferating and differentiated cells. Expressed ubiquitously at low levels. Expressed in roots, cotyledons, flowers and leaves, especially in vascular tissues.

It is found in the nucleus. Functionally, transcription factor that binds 5'-AACGG-3' motifs in gene promoters. Transcription activator involved in the regulation of cytokinesis, probably via the activation of several G2/M phase-specific genes transcription (e.g. KNOLLE). Transcription repressor that regulates organ growth. Binds to the promoters of G2/M-specific genes and to E2F target genes to prevent their expression in post-mitotic cells and to restrict the time window of their expression in proliferating cells. Required for the maintenance of diploidy. This is Transcription factor MYB3R-1 from Arabidopsis thaliana (Mouse-ear cress).